Consider the following 628-residue polypeptide: Methionine--tRNA ligase (628 aa).

The 'HIGH' region signature appears at 9 to 19 (YYVNDVPHLGH). Zn(2+)-binding residues include Cys124, Cys127, Cys142, and Cys145. Residues 294–298 (KMSKS) carry the 'KMSKS' region motif. An ATP-binding site is contributed by Lys297. One can recognise a tRNA-binding domain in the interval 527-628 (DFAKIEIKVA…QLVQNGSLVG (102 aa)).

It belongs to the class-I aminoacyl-tRNA synthetase family. MetG type 2A subfamily. Homodimer. The cofactor is Zn(2+).

The protein resides in the cytoplasm. The enzyme catalyses tRNA(Met) + L-methionine + ATP = L-methionyl-tRNA(Met) + AMP + diphosphate. Is required not only for elongation of protein synthesis but also for the initiation of all mRNA translation through initiator tRNA(fMet) aminoacylation. In Campylobacter jejuni subsp. jejuni serotype O:2 (strain ATCC 700819 / NCTC 11168), this protein is Methionine--tRNA ligase (metG).